Consider the following 74-residue polypeptide: Exodeoxyribonuclease 7 small subunit (74 aa).

It belongs to the XseB family. In terms of assembly, heterooligomer composed of large and small subunits.

It is found in the cytoplasm. It carries out the reaction Exonucleolytic cleavage in either 5'- to 3'- or 3'- to 5'-direction to yield nucleoside 5'-phosphates.. In terms of biological role, bidirectionally degrades single-stranded DNA into large acid-insoluble oligonucleotides, which are then degraded further into small acid-soluble oligonucleotides. The sequence is that of Exodeoxyribonuclease 7 small subunit from Neisseria meningitidis serogroup A / serotype 4A (strain DSM 15465 / Z2491).